Here is a 335-residue protein sequence, read N- to C-terminus: Tetraacyldisaccharide 4'-kinase (335 aa).

51 to 58 (HVGGAGKT) lines the ATP pocket.

This sequence belongs to the LpxK family.

It catalyses the reaction a lipid A disaccharide + ATP = a lipid IVA + ADP + H(+). It participates in glycolipid biosynthesis; lipid IV(A) biosynthesis; lipid IV(A) from (3R)-3-hydroxytetradecanoyl-[acyl-carrier-protein] and UDP-N-acetyl-alpha-D-glucosamine: step 6/6. Its function is as follows. Transfers the gamma-phosphate of ATP to the 4'-position of a tetraacyldisaccharide 1-phosphate intermediate (termed DS-1-P) to form tetraacyldisaccharide 1,4'-bis-phosphate (lipid IVA). This Nitrobacter hamburgensis (strain DSM 10229 / NCIMB 13809 / X14) protein is Tetraacyldisaccharide 4'-kinase.